Here is a 253-residue protein sequence, read N- to C-terminus: MILVIDVGNTNIVLGVYDEQTLLQHWRIATDRTRTTDEYGMLVKALFRDAELNVEDIEGIVLSSVVPPVVFPLENMCVRYFNRRPFVIGPGIKTGLDLKVDNPREVGADRIVNAVAATVKYDGPLIIVDFGTATTYCYIDAQKRYYGGIISPGVMVSTEALYNKAAKLPRIEIAKPQSTIGRNTVHAMQSGTYFGYVAQVDGLVHRMKEEMGEATVIATGGLARLISEESATIKIVDPFLTLDGLRIIYERNK.

Residue 6–13 (DVGNTNIV) participates in ATP binding. A substrate-binding site is contributed by 107-110 (GADR). The Proton acceptor role is filled by Asp109. K(+) is bound at residue Asp129. Thr132 serves as a coordination point for ATP. Thr184 provides a ligand contact to substrate.

Belongs to the type III pantothenate kinase family. Homodimer. Requires NH4(+) as cofactor. It depends on K(+) as a cofactor.

It is found in the cytoplasm. It carries out the reaction (R)-pantothenate + ATP = (R)-4'-phosphopantothenate + ADP + H(+). The protein operates within cofactor biosynthesis; coenzyme A biosynthesis; CoA from (R)-pantothenate: step 1/5. Functionally, catalyzes the phosphorylation of pantothenate (Pan), the first step in CoA biosynthesis. This is Type III pantothenate kinase from Exiguobacterium sibiricum (strain DSM 17290 / CCUG 55495 / CIP 109462 / JCM 13490 / 255-15).